The primary structure comprises 156 residues: Transcription antitermination protein NusB (156 aa).

The protein belongs to the NusB family.

Functionally, involved in transcription antitermination. Required for transcription of ribosomal RNA (rRNA) genes. Binds specifically to the boxA antiterminator sequence of the ribosomal RNA (rrn) operons. This chain is Transcription antitermination protein NusB, found in Bartonella tribocorum (strain CIP 105476 / IBS 506).